The sequence spans 359 residues: Ras association domain-containing protein 7 (359 aa).

The region spanning 6-89 (VAMELKVWVD…VQFVLRRTGP (84 aa)) is the Ras-associating domain. Positions 87–123 (TGPSLSGRPSSDNCPPPERCPVRASLPPKPSAIPGRE) are disordered. Positions 89-99 (PSLSGRPSSDN) are enriched in polar residues. Coiled coils occupy residues 180 to 208 (WEQE…TAEH) and 242 to 301 (AAER…QQFI). The tract at residues 339-359 (SHILVSSLSPEVPPMRQSSWR) is disordered.

As to quaternary structure, interacts with MAP2K7 and GTP-bound NRAS. Post-translationally, polyubiquitinated and degraded by the proteasome upon prolonged stress stimuli.

It localises to the cytoplasm. The protein resides in the cytoskeleton. Its subcellular location is the microtubule organizing center. The protein localises to the centrosome. Functionally, negatively regulates stress-induced JNK activation and apoptosis by promoting MAP2K7 phosphorylation and inhibiting its ability to activate JNK. Following prolonged stress, anti-apoptotic effect stops because of degradation of RASSF7 protein via the ubiquitin-proteasome pathway. Required for the activation of AURKB and chromosomal congression during mitosis where it stimulates microtubule polymerization. The sequence is that of Ras association domain-containing protein 7 (Rassf7) from Mus musculus (Mouse).